Here is an 817-residue protein sequence, read N- to C-terminus: Protein hunchback (817 aa).

Disordered regions lie at residues proline 51–leucine 77, histidine 93–alanine 132, and tyrosine 187–aspartate 252. Low complexity predominate over residues glutamine 62–proline 76. Residues phenylalanine 103–glycine 119 are compositionally biased toward polar residues. Residues glutamine 189–glutamine 201 are compositionally biased toward low complexity. 4 C2H2-type zinc fingers span residues histidine 287–histidine 309, leucine 316–histidine 338, phenylalanine 344–histidine 366, and tyrosine 372–histidine 396. Disordered regions lie at residues proline 456–alanine 477, glutamine 491–glutamine 513, glutamine 564–proline 619, and alanine 666–serine 758. A compositionally biased stretch (low complexity) spans glutamine 564–glutamate 576. Over residues asparagine 577 to phenylalanine 595 the composition is skewed to acidic residues. Over residues methionine 680–asparagine 694 the composition is skewed to polar residues. Positions proline 721–serine 758 are enriched in low complexity. C2H2-type zinc fingers lie at residues tyrosine 764–histidine 786 and phenylalanine 792–histidine 816.

This sequence belongs to the hunchback C2H2-type zinc-finger protein family.

Its subcellular location is the nucleus. Its function is as follows. Gap class segmentation protein that controls development of head structures. The sequence is that of Protein hunchback (hb) from Musca domestica (House fly).